The sequence spans 115 residues: uncharacterized protein (115 aa).

3 consecutive transmembrane segments (helical) span residues 1 to 21, 33 to 53, and 54 to 74; these read MFLAGVLCMCAAAASALFGSW, ALALRAMAPTQLAAAVMLAAG, and GVVAVAAPGHTALMVVIVCIA.

The protein to M.leprae ML0030.

The protein localises to the cell membrane. This is an uncharacterized protein from Mycobacterium tuberculosis (strain CDC 1551 / Oshkosh).